A 108-amino-acid polypeptide reads, in one-letter code: Protein YcgL (108 aa).

The region spanning 12–96 is the YcgL domain; the sequence is MFCVIYRSSK…PPEDLLKQHL (85 aa).

The protein is Protein YcgL of Escherichia coli O9:H4 (strain HS).